Reading from the N-terminus, the 450-residue chain is Ribulose bisphosphate carboxylase large chain (450 aa).

Lysine 4 is subject to N6,N6,N6-trimethyllysine. Asparagine 113 and threonine 163 together coordinate substrate. Lysine 165 functions as the Proton acceptor in the catalytic mechanism. Lysine 167 is a binding site for substrate. Positions 191, 193, and 194 each coordinate Mg(2+). Residue lysine 191 is modified to N6-carboxylysine. Histidine 284 functions as the Proton acceptor in the catalytic mechanism. Arginine 285, histidine 317, and serine 369 together coordinate substrate.

Belongs to the RuBisCO large chain family. Type I subfamily. Heterohexadecamer of 8 large chains and 8 small chains; disulfide-linked. The disulfide link is formed within the large subunit homodimers. Mg(2+) is required as a cofactor. The disulfide bond which can form in the large chain dimeric partners within the hexadecamer appears to be associated with oxidative stress and protein turnover.

Its subcellular location is the plastid. The protein resides in the chloroplast. The enzyme catalyses 2 (2R)-3-phosphoglycerate + 2 H(+) = D-ribulose 1,5-bisphosphate + CO2 + H2O. The catalysed reaction is D-ribulose 1,5-bisphosphate + O2 = 2-phosphoglycolate + (2R)-3-phosphoglycerate + 2 H(+). RuBisCO catalyzes two reactions: the carboxylation of D-ribulose 1,5-bisphosphate, the primary event in carbon dioxide fixation, as well as the oxidative fragmentation of the pentose substrate in the photorespiration process. Both reactions occur simultaneously and in competition at the same active site. The chain is Ribulose bisphosphate carboxylase large chain from Crassula rupestris subsp. marnieriana (Pygmyweed).